The following is a 308-amino-acid chain: Aspartate carbamoyltransferase catalytic subunit (308 aa).

Carbamoyl phosphate is bound by residues Arg51 and Thr52. Position 79 (Lys79) interacts with L-aspartate. Carbamoyl phosphate-binding residues include Arg101, His130, and Gln133. Residues Arg163 and Arg215 each contribute to the L-aspartate site. Carbamoyl phosphate is bound by residues Ala258 and Pro259.

Belongs to the aspartate/ornithine carbamoyltransferase superfamily. ATCase family. As to quaternary structure, heterododecamer (2C3:3R2) of six catalytic PyrB chains organized as two trimers (C3), and six regulatory PyrI chains organized as three dimers (R2).

It carries out the reaction carbamoyl phosphate + L-aspartate = N-carbamoyl-L-aspartate + phosphate + H(+). It functions in the pathway pyrimidine metabolism; UMP biosynthesis via de novo pathway; (S)-dihydroorotate from bicarbonate: step 2/3. Catalyzes the condensation of carbamoyl phosphate and aspartate to form carbamoyl aspartate and inorganic phosphate, the committed step in the de novo pyrimidine nucleotide biosynthesis pathway. The chain is Aspartate carbamoyltransferase catalytic subunit from Pediococcus pentosaceus (strain ATCC 25745 / CCUG 21536 / LMG 10740 / 183-1w).